The sequence spans 258 residues: Aspartate/glutamate leucyltransferase (258 aa).

This sequence belongs to the R-transferase family. Bpt subfamily.

Its subcellular location is the cytoplasm. The enzyme catalyses N-terminal L-glutamyl-[protein] + L-leucyl-tRNA(Leu) = N-terminal L-leucyl-L-glutamyl-[protein] + tRNA(Leu) + H(+). The catalysed reaction is N-terminal L-aspartyl-[protein] + L-leucyl-tRNA(Leu) = N-terminal L-leucyl-L-aspartyl-[protein] + tRNA(Leu) + H(+). Its function is as follows. Functions in the N-end rule pathway of protein degradation where it conjugates Leu from its aminoacyl-tRNA to the N-termini of proteins containing an N-terminal aspartate or glutamate. This is Aspartate/glutamate leucyltransferase from Bradyrhizobium sp. (strain ORS 278).